The primary structure comprises 183 residues: Translation initiation factor IF-3 (183 aa).

Belongs to the IF-3 family. In terms of assembly, monomer.

It is found in the cytoplasm. Functionally, IF-3 binds to the 30S ribosomal subunit and shifts the equilibrium between 70S ribosomes and their 50S and 30S subunits in favor of the free subunits, thus enhancing the availability of 30S subunits on which protein synthesis initiation begins. The sequence is that of Translation initiation factor IF-3 from Azobacteroides pseudotrichonymphae genomovar. CFP2.